Here is a 139-residue protein sequence, read N- to C-terminus: Small ribosomal subunit protein uS12 (139 aa).

Disordered stretches follow at residues Met1–Pro22 and Lys37–Lys57. Residues Arg9–Ser19 show a composition bias toward basic residues. Asp102 carries the post-translational modification 3-methylthioaspartic acid.

This sequence belongs to the universal ribosomal protein uS12 family. In terms of assembly, part of the 30S ribosomal subunit. Contacts proteins S8 and S17. May interact with IF1 in the 30S initiation complex.

Functionally, with S4 and S5 plays an important role in translational accuracy. Its function is as follows. Interacts with and stabilizes bases of the 16S rRNA that are involved in tRNA selection in the A site and with the mRNA backbone. Located at the interface of the 30S and 50S subunits, it traverses the body of the 30S subunit contacting proteins on the other side and probably holding the rRNA structure together. The combined cluster of proteins S8, S12 and S17 appears to hold together the shoulder and platform of the 30S subunit. This is Small ribosomal subunit protein uS12 from Limosilactobacillus reuteri (strain DSM 20016) (Lactobacillus reuteri).